Reading from the N-terminus, the 221-residue chain is MQDFAFAALSIWLCLGATALAESHGPQHCTSPNMTGVLTVMALTGGEIKATGHYSYDSTDKKLRFTESEMHLNKTEHLEDYLMLFEEGVFYDIDMKNQSCKKMSLHSHAHALELPAGAAHQVELFLGSDTVQEENIKVNIWMGSVAETKGQYSVLTTVGECLPLSTFYSTDSITLLFSNSEVVTEVKAPEMFTLPSFCEAVELEETPKGQKNDFFNIFNTV.

The first 21 residues, 1–21, serve as a signal peptide directing secretion; that stretch reads MQDFAFAALSIWLCLGATALA. Asn-33, Asn-73, and Asn-97 each carry an N-linked (GlcNAc...) asparagine glycan.

This sequence belongs to the ependymin family. Post-translationally, binds calcium through the terminal sialic acids. EPDs are synthesized in the meninx and secreted in the cerebrospinal fluid.

The protein resides in the secreted. Its function is as follows. May play a role in neural plasticity. May be involved during axon regeneration. The polypeptide is Ependymin-2 (epd2) (Salmo salar (Atlantic salmon)).